The sequence spans 370 residues: Glutamate 5-kinase (370 aa).

Lysine 17 provides a ligand contact to ATP. Residues serine 57, aspartate 144, and asparagine 156 each coordinate substrate. Residues 176-177 (SD) and 220-226 (TGGMASK) contribute to the ATP site. Residues 282–360 (AGALTLDDGA…HELPVEMRRP (79 aa)) enclose the PUA domain.

The protein belongs to the glutamate 5-kinase family.

Its subcellular location is the cytoplasm. It carries out the reaction L-glutamate + ATP = L-glutamyl 5-phosphate + ADP. It functions in the pathway amino-acid biosynthesis; L-proline biosynthesis; L-glutamate 5-semialdehyde from L-glutamate: step 1/2. In terms of biological role, catalyzes the transfer of a phosphate group to glutamate to form L-glutamate 5-phosphate. The chain is Glutamate 5-kinase from Mycolicibacterium smegmatis (strain ATCC 700084 / mc(2)155) (Mycobacterium smegmatis).